Here is a 331-residue protein sequence, read N- to C-terminus: Ketol-acid reductoisomerase (NADP(+)) (331 aa).

A KARI N-terminal Rossmann domain is found at 2 to 182 (ARMYYDQDAN…GGTRAGILET (181 aa)). Residues 25–28 (YGSQ), Ser51, Ser53, and 83–86 (DEVQ) each bind NADP(+). His108 is a catalytic residue. An NADP(+)-binding site is contributed by Gly134. Positions 183–328 (TFREETETDL…KDLRAMFSWL (146 aa)) constitute a KARI C-terminal knotted domain. Asp191, Glu195, Glu227, and Glu231 together coordinate Mg(2+). Ser252 is a substrate binding site.

This sequence belongs to the ketol-acid reductoisomerase family. Homooctamer. Mg(2+) is required as a cofactor.

It catalyses the reaction (2R)-2,3-dihydroxy-3-methylbutanoate + NADP(+) = (2S)-2-acetolactate + NADPH + H(+). The catalysed reaction is (2R,3R)-2,3-dihydroxy-3-methylpentanoate + NADP(+) = (S)-2-ethyl-2-hydroxy-3-oxobutanoate + NADPH + H(+). The protein operates within amino-acid biosynthesis; L-isoleucine biosynthesis; L-isoleucine from 2-oxobutanoate: step 2/4. It functions in the pathway amino-acid biosynthesis; L-valine biosynthesis; L-valine from pyruvate: step 2/4. In terms of biological role, involved in the biosynthesis of branched-chain amino acids (BCAA). Catalyzes an alkyl-migration followed by a ketol-acid reduction of (S)-2-acetolactate (S2AL) to yield (R)-2,3-dihydroxy-isovalerate. In the isomerase reaction, S2AL is rearranged via a Mg-dependent methyl migration to produce 3-hydroxy-3-methyl-2-ketobutyrate (HMKB). In the reductase reaction, this 2-ketoacid undergoes a metal-dependent reduction by NADPH to yield (R)-2,3-dihydroxy-isovalerate. This Synechocystis sp. (strain ATCC 27184 / PCC 6803 / Kazusa) protein is Ketol-acid reductoisomerase (NADP(+)).